A 644-amino-acid polypeptide reads, in one-letter code: Exoribonuclease 2 (644 aa).

One can recognise an RNB domain in the interval 189–516 (REDLTALDFV…NHRLLKAIIK (328 aa)). Positions 561–643 (DSRFAAEIID…ETRSVIARPV (83 aa)) constitute an S1 motif domain.

Belongs to the RNR ribonuclease family. RNase II subfamily.

It is found in the cytoplasm. The catalysed reaction is Exonucleolytic cleavage in the 3'- to 5'-direction to yield nucleoside 5'-phosphates.. Its function is as follows. Involved in mRNA degradation. Hydrolyzes single-stranded polyribonucleotides processively in the 3' to 5' direction. The protein is Exoribonuclease 2 of Cronobacter sakazakii (strain ATCC BAA-894) (Enterobacter sakazakii).